The following is a 488-amino-acid chain: Aspartyl/glutamyl-tRNA(Asn/Gln) amidotransferase subunit B (488 aa).

The protein belongs to the GatB/GatE family. GatB subfamily. In terms of assembly, heterotrimer of A, B and C subunits.

The enzyme catalyses L-glutamyl-tRNA(Gln) + L-glutamine + ATP + H2O = L-glutaminyl-tRNA(Gln) + L-glutamate + ADP + phosphate + H(+). The catalysed reaction is L-aspartyl-tRNA(Asn) + L-glutamine + ATP + H2O = L-asparaginyl-tRNA(Asn) + L-glutamate + ADP + phosphate + 2 H(+). Its function is as follows. Allows the formation of correctly charged Asn-tRNA(Asn) or Gln-tRNA(Gln) through the transamidation of misacylated Asp-tRNA(Asn) or Glu-tRNA(Gln) in organisms which lack either or both of asparaginyl-tRNA or glutaminyl-tRNA synthetases. The reaction takes place in the presence of glutamine and ATP through an activated phospho-Asp-tRNA(Asn) or phospho-Glu-tRNA(Gln). This is Aspartyl/glutamyl-tRNA(Asn/Gln) amidotransferase subunit B from Chlamydia trachomatis serovar L2 (strain ATCC VR-902B / DSM 19102 / 434/Bu).